Consider the following 78-residue polypeptide: RNA-binding protein Hfq (78 aa).

One can recognise a Sm domain in the interval 10–69; that stretch reads DPFLNALRKEHVPVSIYLVNGIKLQGNIESFDQYVVLLRNTVTQMVYKHAISTVVPARPV.

Belongs to the Hfq family. As to quaternary structure, homohexamer.

RNA chaperone that binds small regulatory RNA (sRNAs) and mRNAs to facilitate mRNA translational regulation in response to envelope stress, environmental stress and changes in metabolite concentrations. Also binds with high specificity to tRNAs. This chain is RNA-binding protein Hfq, found in Paraburkholderia phymatum (strain DSM 17167 / CIP 108236 / LMG 21445 / STM815) (Burkholderia phymatum).